Reading from the N-terminus, the 163-residue chain is NADPH-dependent 7-cyano-7-deazaguanine reductase (163 aa).

Positions methionine 1–arginine 10 are enriched in basic residues. The interval methionine 1 to histidine 23 is disordered. Cysteine 61 (thioimide intermediate) is an active-site residue. The Proton donor role is filled by aspartate 68. Substrate contacts are provided by residues leucine 83–serine 85 and histidine 102–glutamate 103.

It belongs to the GTP cyclohydrolase I family. QueF type 1 subfamily.

The protein localises to the cytoplasm. It carries out the reaction 7-aminomethyl-7-carbaguanine + 2 NADP(+) = 7-cyano-7-deazaguanine + 2 NADPH + 3 H(+). It participates in tRNA modification; tRNA-queuosine biosynthesis. Catalyzes the NADPH-dependent reduction of 7-cyano-7-deazaguanine (preQ0) to 7-aminomethyl-7-deazaguanine (preQ1). The polypeptide is NADPH-dependent 7-cyano-7-deazaguanine reductase (Rhodopseudomonas palustris (strain BisA53)).